The chain runs to 442 residues: 3-phosphoshikimate 1-carboxyvinyltransferase (442 aa).

3-phosphoshikimate contacts are provided by Lys25, Ser26, and Arg30. Residue Lys25 coordinates phosphoenolpyruvate. Residues Gly96 and Arg124 each coordinate phosphoenolpyruvate. Positions 171, 172, 173, 203, 325, and 352 each coordinate 3-phosphoshikimate. Gln173 contributes to the phosphoenolpyruvate binding site. Asp325 acts as the Proton acceptor in catalysis. Residues Arg356, Arg400, and Lys425 each coordinate phosphoenolpyruvate.

Belongs to the EPSP synthase family. As to quaternary structure, monomer.

It is found in the cytoplasm. It carries out the reaction 3-phosphoshikimate + phosphoenolpyruvate = 5-O-(1-carboxyvinyl)-3-phosphoshikimate + phosphate. The protein operates within metabolic intermediate biosynthesis; chorismate biosynthesis; chorismate from D-erythrose 4-phosphate and phosphoenolpyruvate: step 6/7. Its function is as follows. Catalyzes the transfer of the enolpyruvyl moiety of phosphoenolpyruvate (PEP) to the 5-hydroxyl of shikimate-3-phosphate (S3P) to produce enolpyruvyl shikimate-3-phosphate and inorganic phosphate. This Bordetella parapertussis (strain 12822 / ATCC BAA-587 / NCTC 13253) protein is 3-phosphoshikimate 1-carboxyvinyltransferase.